The following is a 142-amino-acid chain: Large ribosomal subunit protein bL21 (142 aa).

The segment covering 73–84 (KRRRQNSKRTRG) has biased composition (basic residues). The segment at 73–142 (KRRRQNSKRT…KAAAKAESAE (70 aa)) is disordered. A compositionally biased stretch (basic and acidic residues) spans 107-125 (KAAEKKAPKADAAEGEAAK). Residues 126–135 (PKKAAPKKAA) show a composition bias toward basic residues.

This sequence belongs to the bacterial ribosomal protein bL21 family. Part of the 50S ribosomal subunit. Contacts protein L20.

Functionally, this protein binds to 23S rRNA in the presence of protein L20. This is Large ribosomal subunit protein bL21 from Brucella canis (strain ATCC 23365 / NCTC 10854 / RM-666).